Consider the following 205-residue polypeptide: uncharacterized protein (205 aa).

This sequence belongs to the peptidase C56 family.

This is an uncharacterized protein from Methanocaldococcus jannaschii (strain ATCC 43067 / DSM 2661 / JAL-1 / JCM 10045 / NBRC 100440) (Methanococcus jannaschii).